We begin with the raw amino-acid sequence, 678 residues long: UvrABC system protein B (678 aa).

The Helicase ATP-binding domain occupies 31 to 417 (EGLENGLAHQ…KSGGEIIDQV (387 aa)). 44–51 (GVTGSGKT) is a binding site for ATP. The Beta-hairpin motif lies at 97-120 (YYDYYQPEAYVPSSDTFIEKDASI). A Helicase C-terminal domain is found at 436–589 (QVDDLLSEAR…QMKYNEARGI (154 aa)). Residues 638–673 (QQQIKKLEQQMYKYAQDLEFEKAAAVRDQLQQLREH) form the UVR domain.

It belongs to the UvrB family. Forms a heterotetramer with UvrA during the search for lesions. Interacts with UvrC in an incision complex.

It localises to the cytoplasm. Its function is as follows. The UvrABC repair system catalyzes the recognition and processing of DNA lesions. A damage recognition complex composed of 2 UvrA and 2 UvrB subunits scans DNA for abnormalities. Upon binding of the UvrA(2)B(2) complex to a putative damaged site, the DNA wraps around one UvrB monomer. DNA wrap is dependent on ATP binding by UvrB and probably causes local melting of the DNA helix, facilitating insertion of UvrB beta-hairpin between the DNA strands. Then UvrB probes one DNA strand for the presence of a lesion. If a lesion is found the UvrA subunits dissociate and the UvrB-DNA preincision complex is formed. This complex is subsequently bound by UvrC and the second UvrB is released. If no lesion is found, the DNA wraps around the other UvrB subunit that will check the other stand for damage. In Pasteurella multocida (strain Pm70), this protein is UvrABC system protein B.